Consider the following 188-residue polypeptide: Probable nicotinate-nucleotide adenylyltransferase (188 aa).

It belongs to the NadD family.

The enzyme catalyses nicotinate beta-D-ribonucleotide + ATP + H(+) = deamido-NAD(+) + diphosphate. Its pathway is cofactor biosynthesis; NAD(+) biosynthesis; deamido-NAD(+) from nicotinate D-ribonucleotide: step 1/1. Functionally, catalyzes the reversible adenylation of nicotinate mononucleotide (NaMN) to nicotinic acid adenine dinucleotide (NaAD). The polypeptide is Probable nicotinate-nucleotide adenylyltransferase (Listeria innocua serovar 6a (strain ATCC BAA-680 / CLIP 11262)).